An 833-amino-acid polypeptide reads, in one-letter code: Leucine--tRNA ligase (833 aa).

The short motif at 41–52 (PYPSGAGLHVGH) is the 'HIGH' region element. The short motif at 610–614 (KMSKS) is the 'KMSKS' region element. Lys-613 is a binding site for ATP.

Belongs to the class-I aminoacyl-tRNA synthetase family.

Its subcellular location is the cytoplasm. It catalyses the reaction tRNA(Leu) + L-leucine + ATP = L-leucyl-tRNA(Leu) + AMP + diphosphate. This Streptococcus sanguinis (strain SK36) protein is Leucine--tRNA ligase.